A 134-amino-acid chain; its full sequence is Large ribosomal subunit protein bL20 (134 aa).

The protein belongs to the bacterial ribosomal protein bL20 family.

In terms of biological role, binds directly to 23S ribosomal RNA and is necessary for the in vitro assembly process of the 50S ribosomal subunit. It is not involved in the protein synthesizing functions of that subunit. The protein is Large ribosomal subunit protein bL20 of Sinorhizobium medicae (strain WSM419) (Ensifer medicae).